We begin with the raw amino-acid sequence, 504 residues long: Xylose import ATP-binding protein XylG (504 aa).

ABC transporter domains follow at residues 6–243 (LEMK…VGRE) and 260–504 (LKVD…TGGK). 38 to 45 (GENGAGKS) is an ATP binding site.

It belongs to the ABC transporter superfamily. Xylose importer (TC 3.A.1.2.4) family. The complex is composed of two ATP-binding proteins (XylG), two transmembrane proteins (XylH) and a solute-binding protein (XylF).

It is found in the cell membrane. It carries out the reaction D-xylose(out) + ATP + H2O = D-xylose(in) + ADP + phosphate + H(+). Its function is as follows. Part of the ABC transporter complex XylFGH involved in xylose import. Responsible for energy coupling to the transport system. The sequence is that of Xylose import ATP-binding protein XylG from Geobacillus kaustophilus (strain HTA426).